Consider the following 149-residue polypeptide: Nucleoside diphosphate kinase (149 aa).

Residues Lys-9, Phe-57, Arg-85, Thr-91, Arg-102, and Asn-112 each contribute to the ATP site. His-115 (pros-phosphohistidine intermediate) is an active-site residue.

It belongs to the NDK family. In terms of assembly, homotetramer. Requires Mg(2+) as cofactor.

It is found in the cytoplasm. The enzyme catalyses a 2'-deoxyribonucleoside 5'-diphosphate + ATP = a 2'-deoxyribonucleoside 5'-triphosphate + ADP. It carries out the reaction a ribonucleoside 5'-diphosphate + ATP = a ribonucleoside 5'-triphosphate + ADP. Functionally, major role in the synthesis of nucleoside triphosphates other than ATP. The ATP gamma phosphate is transferred to the NDP beta phosphate via a ping-pong mechanism, using a phosphorylated active-site intermediate. This chain is Nucleoside diphosphate kinase, found in Crocosphaera subtropica (strain ATCC 51142 / BH68) (Cyanothece sp. (strain ATCC 51142)).